Here is a 130-residue protein sequence, read N- to C-terminus: Holo-[acyl-carrier-protein] synthase (130 aa).

Mg(2+) contacts are provided by Asp9 and Glu58.

It belongs to the P-Pant transferase superfamily. AcpS family. It depends on Mg(2+) as a cofactor.

It localises to the cytoplasm. It carries out the reaction apo-[ACP] + CoA = holo-[ACP] + adenosine 3',5'-bisphosphate + H(+). In terms of biological role, transfers the 4'-phosphopantetheine moiety from coenzyme A to a Ser of acyl-carrier-protein. The polypeptide is Holo-[acyl-carrier-protein] synthase (Mycobacterium bovis (strain ATCC BAA-935 / AF2122/97)).